The following is a 11197-amino-acid chain: Nonribosomal peptide synthetase 5 (11197 aa).

The interval 19-413 (AQRARKQPDA…DGTLQVVGHK (395 aa)) is adenylation (A) domain 1. The segment at 426-452 (HASSSASSVGETPGVTGPISTPMGDSV) is disordered. Positions 690–897 (KQLRQFCQEQ…LMDESMKQQI (208 aa)) are condensation (C) domain 1. The segment at 918-1310 (DAAQDYPDAP…GRHDGQLKVR (393 aa)) is adenylation (A) domain 2. One can recognise a Carrier 1 domain in the interval 1446–1522 (ADRSPVHMML…DMANNIAISE (77 aa)). Ser-1483 is modified (O-(pantetheine 4'-phosphoryl)serine). A condensation (C) domain 2 region spans residues 1952–2380 (VEDVYPCSPV…SDISLMDPLS (429 aa)). The adenylation (A) domain 3 stretch occupies residues 2406–2805 (VARIEPDKMA…QRKDTQIKIR (400 aa)). In terms of domain architecture, Carrier 2 spans 2945–3021 (DSLTSTEVTI…SLAAFVDYDS (77 aa)). Ser-2982 bears the O-(pantetheine 4'-phosphoryl)serine mark. An epimerase (E) domain 1 region spans residues 3041-3481 (EESFALSPIQ…TSTMKSEFTL (441 aa)). The interval 3515–3957 (EEIFPCSPMQ…VSPETRCELD (443 aa)) is condensation (C) domain 3. Residues 3976–4371 (FEQQVEKIPD…RRRDNQVKVR (396 aa)) are adenylation (A) domain 4. The 77-residue stretch at 4508–4584 (RKLTPMEQQL…ELANHARFKA (77 aa)) folds into the Carrier 3 domain. Ser-4545 is subject to O-(pantetheine 4'-phosphoryl)serine. An epimerase (E) domain 2 region spans residues 4603–5022 (FPLLPIQRMF…LNEYTAALRS (420 aa)). Positions 5069–5501 (ESIYPCSPLQ…LVGDSERQGL (433 aa)) are condensation (C) domain 4. Residues 5521–5918 (EAQVKAIPDN…RRKDTQVKVR (398 aa)) are adenylation (A) domain 5. Residues 6068-6141 (SEAEDIIRAV…ALAQFVSQST (74 aa)) form the Carrier 4 domain. An O-(pantetheine 4'-phosphoryl)serine modification is found at Ser-6102. The tract at residues 6162 to 6512 (FSLSPIQQMF…MEILFNYFGQ (351 aa)) is epimerase (E) domain 3. A condensation (C) domain 5 region spans residues 6636–7076 (EEIFPCSPIQ…LVGAETRREM (441 aa)). An adenylation (A) domain 6 region spans residues 7097-7491 (ERNSQAMPDR…RRRDNQVKVR (395 aa)). In terms of domain architecture, Carrier 5 spans 7636-7712 (KPKTKMEEHF…DLAGRSRFKN (77 aa)). An O-(pantetheine 4'-phosphoryl)serine modification is found at Ser-7673. Residues 7733–8162 (ALLPIQRLFF…KYMLETLASQ (430 aa)) are epimerase (E) domain 4. Positions 8205-8638 (EASYPCSPLQ…MLGDSGRKRI (434 aa)) are condensation (C) domain 6. The adenylation (A) domain 7 stretch occupies residues 8660–8832 (EAHVKESPNR…DHRATATEIV (173 aa)). Positions 9173–9248 (SAQTAVVQII…AMAAKAQQIG (76 aa)) constitute a Carrier 6 domain. Ser-9209 is modified (O-(pantetheine 4'-phosphoryl)serine). An epimerase (E) domain 5 region spans residues 9565 to 9683 (RVKDMRRAIP…LHEVVSALQK (119 aa)). The condensation (C) domain 7 stretch occupies residues 9721–10116 (VEDVYPTSPM…LVPAKHMEQL (396 aa)). The segment at 10136–10529 (DDMVRSTPTA…VGRKDTQIKI (394 aa)) is adenylation (A) domain 8. The region spanning 10663 to 10749 (LDSSDYVAMQ…TLAVTIKADM (87 aa)) is the Carrier 7 domain. Ser-10708 bears the O-(pantetheine 4'-phosphoryl)serine mark. The thioesterase (TE) domain stretch occupies residues 10806 to 11104 (NFLVTGSTGF…SLRPMSGPEW (299 aa)).

Belongs to the NRP synthetase family.

The protein operates within secondary metabolite biosynthesis. In terms of biological role, nonribosomal peptide synthetase; part of the Fg3_54/C64 gene cluster that mediates the biosynthesis of the octapeptide fusaoctaxin A, a virulence factor that is required for cell-to-cell invasiveness of plant host. The 2 nonribosomal peptide synthetases NRPS9 and NRPS5 form an assembly line which likely utilizes GABA as a starter unit (loaded on the unique module M1 of NRPS9) and sequentially incorporates seven extender units composed of the residues L-Ala, L-allo-Ile, L-Ser, L-Val, L-Ser, L-Leu and L-Leu, respectively. During the process, each of the residues that are tethered on modules M3-M7 of NRPS5 containing an E domain can undergo an epimerization reaction to produce a D-configuration before the transpeptidation reaction occurs. The elongation of the peptidyl chain might be terminated by module M8-mediated L-Leu incorporation, followed by R domain-catalyzed 4 electron reduction to release the resulting octapeptide from the assembly line as an alcohol. Fusaoctaxin A is cleaved by the cluster specific ABC transporter FGM5 to the pentapeptide fusapentaxin A and the tripeptide fusatrixin A. The other enzymes from the cluster, FGM1, FGM2, FGM3 and FGM9 seem not to be involved in the biosynthesis of fusaoctaxin A and their functions have still to be determined. In Gibberella zeae (strain ATCC MYA-4620 / CBS 123657 / FGSC 9075 / NRRL 31084 / PH-1) (Wheat head blight fungus), this protein is Nonribosomal peptide synthetase 5.